The chain runs to 477 residues: Probable cytosol aminopeptidase (477 aa).

Positions 245 and 250 each coordinate Mn(2+). Residue lysine 257 is part of the active site. Mn(2+) is bound by residues aspartate 268, aspartate 327, and glutamate 329. Arginine 331 is an active-site residue.

This sequence belongs to the peptidase M17 family. Mn(2+) serves as cofactor.

It localises to the cytoplasm. It catalyses the reaction Release of an N-terminal amino acid, Xaa-|-Yaa-, in which Xaa is preferably Leu, but may be other amino acids including Pro although not Arg or Lys, and Yaa may be Pro. Amino acid amides and methyl esters are also readily hydrolyzed, but rates on arylamides are exceedingly low.. It carries out the reaction Release of an N-terminal amino acid, preferentially leucine, but not glutamic or aspartic acids.. Its function is as follows. Presumably involved in the processing and regular turnover of intracellular proteins. Catalyzes the removal of unsubstituted N-terminal amino acids from various peptides. This Exiguobacterium sibiricum (strain DSM 17290 / CCUG 55495 / CIP 109462 / JCM 13490 / 255-15) protein is Probable cytosol aminopeptidase.